A 57-amino-acid polypeptide reads, in one-letter code: UPF0434 protein Spea_1772 (57 aa).

This sequence belongs to the UPF0434 family.

This is UPF0434 protein Spea_1772 from Shewanella pealeana (strain ATCC 700345 / ANG-SQ1).